The sequence spans 208 residues: Small ribosomal subunit protein uS4 (208 aa).

Residues 95–157 (RRIDNVVYRA…DSLKKLVRSN (63 aa)) form the S4 RNA-binding domain.

It belongs to the universal ribosomal protein uS4 family. In terms of assembly, part of the 30S ribosomal subunit. Contacts protein S5. The interaction surface between S4 and S5 is involved in control of translational fidelity.

In terms of biological role, one of the primary rRNA binding proteins, it binds directly to 16S rRNA where it nucleates assembly of the body of the 30S subunit. With S5 and S12 plays an important role in translational accuracy. The sequence is that of Small ribosomal subunit protein uS4 from Borrelia hermsii (strain HS1 / DAH).